The primary structure comprises 358 residues: Mesaconyl-CoA hydratase (358 aa).

Positions 44-148 (AHDPGLRLTH…TSSSRPQYGI (105 aa)) constitute a MaoC-like domain.

Belongs to the enoyl-CoA hydratase/isomerase family.

It carries out the reaction (2R,3S)-beta-methylmalyl-CoA = 2-methylfumaryl-CoA + H2O. In terms of biological role, involved in the methylaspartate cycle. Catalyzes the reversible hydration of mesaconyl-CoA (2-methylfumaryl-CoA) to yield beta-methylmalyl-CoA ((2R,3S)-beta-methylmalyl-CoA). The sequence is that of Mesaconyl-CoA hydratase from Haloarcula marismortui (strain ATCC 43049 / DSM 3752 / JCM 8966 / VKM B-1809) (Halobacterium marismortui).